Here is a 198-residue protein sequence, read N- to C-terminus: Segregation and condensation protein B (198 aa).

The tract at residues 169-198 (LADPAAEEPDQNEMDLFFDRFNQSKEQEEE) is disordered.

Belongs to the ScpB family. In terms of assembly, homodimer. Homodimerization may be required to stabilize the binding of ScpA to the Smc head domains. Component of a cohesin-like complex composed of ScpA, ScpB and the Smc homodimer, in which ScpA and ScpB bind to the head domain of Smc. The presence of the three proteins is required for the association of the complex with DNA.

It is found in the cytoplasm. Participates in chromosomal partition during cell division. May act via the formation of a condensin-like complex containing Smc and ScpA that pull DNA away from mid-cell into both cell halves. The protein is Segregation and condensation protein B of Listeria monocytogenes serotype 4a (strain HCC23).